A 462-amino-acid polypeptide reads, in one-letter code: MSHKLLAFPRLNYISNFNFFYKNTTKNLILDQNFIGNLYLTSTPTCRKLVTIPSNRNIMTTSSNLKESDSGSILENVATKVLNCQEPEAKSSQKIDTDKVSSNKVESTHIPFKVVPKELNKSSSATATSSSKTKTNLRSIIQPYVKLTKPNLTILVTLSSICSYAISPYTVSLPELLFLTMGTALCSGAANAINMGREPEFDKKMPRTVGRPVVRGLISPKQAYQFAGITGSLGCTMLFLGVNPTVSFLGFLNIVLYSWIYTSLKRKSIINTWVGAIVGAIPPLMGWAASSPLDHPGAWCLAGLLYAWQFPHFNALSHNIADQYKGAGYVMTAAENPKLNARVALRYSLLMFPLCFGLSYFGITDWVFQFDSAIANSWLTYLAYKFWMQIKQNYTGQKPTANGIAMANIHAKKLFWGSVWHLPAVLILAMLHKKGQWDRLLIYSGLKSHDHKSQSSNNIGLI.

The next 7 helical transmembrane spans lie at Leu152–Ser172, Leu173–Ile193, Met237–Tyr257, Ile269–Ala289, Pro296–Leu316, Ser348–Phe368, and Ala411–Leu431.

It belongs to the UbiA prenyltransferase family.

The protein localises to the mitochondrion membrane. Its function is as follows. Converts protoheme IX and farnesyl diphosphate to heme O. The sequence is that of Protoheme IX farnesyltransferase, mitochondrial (COX10) from Debaryomyces hansenii (strain ATCC 36239 / CBS 767 / BCRC 21394 / JCM 1990 / NBRC 0083 / IGC 2968) (Yeast).